The primary structure comprises 545 residues: Chaperonin GroEL 1 (545 aa).

ATP-binding positions include 30–33 (TLGP), Lys51, 87–91 (DGTTT), Gly415, and Asp495.

Belongs to the chaperonin (HSP60) family. As to quaternary structure, forms a cylinder of 14 subunits composed of two heptameric rings stacked back-to-back. Interacts with the co-chaperonin GroES.

The protein resides in the cytoplasm. The catalysed reaction is ATP + H2O + a folded polypeptide = ADP + phosphate + an unfolded polypeptide.. Functionally, together with its co-chaperonin GroES, plays an essential role in assisting protein folding. The GroEL-GroES system forms a nano-cage that allows encapsulation of the non-native substrate proteins and provides a physical environment optimized to promote and accelerate protein folding. This Sinorhizobium medicae (strain WSM419) (Ensifer medicae) protein is Chaperonin GroEL 1.